Here is a 601-residue protein sequence, read N- to C-terminus: Phosphomethylpyrimidine synthase (601 aa).

Disordered regions lie at residues 1-31 (MTNKDARTPASSQTGEALASPQGDQEAGKSI) and 100-141 (AGRP…RDGQ). Residues 100–112 (AGRPVRPEDDGIK) show a composition bias toward basic and acidic residues. Substrate is bound by residues asparagine 208, methionine 237, tyrosine 266, histidine 302, 322-324 (SRG), 363-366 (DGLR), and glutamate 402. Position 406 (histidine 406) interacts with Zn(2+). Tyrosine 429 serves as a coordination point for substrate. Position 470 (histidine 470) interacts with Zn(2+). Residues cysteine 550, cysteine 553, and cysteine 558 each coordinate [4Fe-4S] cluster.

It belongs to the ThiC family. [4Fe-4S] cluster is required as a cofactor.

The enzyme catalyses 5-amino-1-(5-phospho-beta-D-ribosyl)imidazole + S-adenosyl-L-methionine = 4-amino-2-methyl-5-(phosphooxymethyl)pyrimidine + CO + 5'-deoxyadenosine + formate + L-methionine + 3 H(+). It functions in the pathway cofactor biosynthesis; thiamine diphosphate biosynthesis. Catalyzes the synthesis of the hydroxymethylpyrimidine phosphate (HMP-P) moiety of thiamine from aminoimidazole ribotide (AIR) in a radical S-adenosyl-L-methionine (SAM)-dependent reaction. The chain is Phosphomethylpyrimidine synthase from Streptomyces avermitilis (strain ATCC 31267 / DSM 46492 / JCM 5070 / NBRC 14893 / NCIMB 12804 / NRRL 8165 / MA-4680).